We begin with the raw amino-acid sequence, 36 residues long: Thrombin (36 aa).

In terms of domain architecture, Peptidase S1 spans 19-36; the sequence is IVKGIDAEVASAPMQVML.

It belongs to the peptidase S1 family. Forms a heterodimer with SERPINA5. The gamma-carboxyglutamyl residues, which bind calcium ions, result from the carboxylation of glutamyl residues by a microsomal enzyme, the vitamin K-dependent carboxylase. The modified residues are necessary for the calcium-dependent interaction with a negatively charged phospholipid surface, which is essential for the conversion of prothrombin to thrombin. Post-translationally, N-glycosylated. As to expression, expressed by the liver and secreted in plasma.

It localises to the secreted. It carries out the reaction Selective cleavage of Arg-|-Gly bonds in fibrinogen to form fibrin and release fibrinopeptides A and B.. Its activity is regulated as follows. Inhibited by SERPINA5. Thrombin, which cleaves bonds after Arg and Lys, converts fibrinogen to fibrin and activates factors V, VII, VIII, XIII, and, in complex with thrombomodulin, protein C. Functions in blood homeostasis, inflammation and wound healing. The protein is Thrombin of Salmo salar (Atlantic salmon).